We begin with the raw amino-acid sequence, 327 residues long: Aquaporin-1 (327 aa).

Residues 1–34 (MSSNDSNDTDKQHTRLDPTGVDDAYIPPEQPETK) form a disordered region. The Cytoplasmic portion of the chain corresponds to 1-48 (MSSNDSNDTDKQHTRLDPTGVDDAYIPPEQPETKHHRFKISRDTLRNH). The chain crosses the membrane as a helical span at residues 49–69 (FIAAVGEFCGTFMFLWCAYVI). The Extracellular portion of the chain corresponds to 70-91 (CNVANHDVALVAAPDGSHPGQL). Residues 92–112 (IMIAIGFGFSVMFSIWCFAGV) traverse the membrane as a helical segment. The Cytoplasmic segment spans residues 113-136 (SGGALNPAVSLSLCLARAVSPTRC). Residues 118 to 120 (NPA) carry the NPA 1 motif. Residues 137–157 (VVMWVSQIVAGMAAGGAASAM) form a helical membrane-spanning segment. The Extracellular portion of the chain corresponds to 158–176 (TPGEVLFANSLGLGCSRTR). Residues 177-197 (GLFLEMFGTAILCLTVLMTAV) traverse the membrane as a helical segment. The Cytoplasmic portion of the chain corresponds to 198 to 203 (EKRETN). A helical membrane pass occupies residues 204-224 (FMAALPIGISLFIAHVALTAY). At 225 to 248 (TGTGVNPARSLGAAVAARYFPHYH) the chain is on the extracellular side. The short motif at 230 to 232 (NPA) is the NPA 2 element. A helical membrane pass occupies residues 249 to 269 (WIYWIGPLLGSILAWSVWQLL). The Cytoplasmic segment spans residues 270–327 (QILDYTTYVTAEKAASTKEKAQKKVKPAVPLLWLKSNFPLLFFISRSLALNVIIFGKN).

The protein belongs to the MIP/aquaporin (TC 1.A.8) family.

It localises to the endoplasmic reticulum membrane. The protein resides in the cell membrane. In terms of biological role, water channel required to facilitate the transport of water across membranes. Involved in sporulation, freeze tolerance and osmotolerance. Is non-functional in most laboratory strains. The chain is Aquaporin-1 (AQY1) from Saccharomyces cerevisiae (Baker's yeast).